The primary structure comprises 124 residues: Large ribosomal subunit protein bL12 (124 aa).

The protein belongs to the bacterial ribosomal protein bL12 family. Homodimer. Part of the ribosomal stalk of the 50S ribosomal subunit. Forms a multimeric L10(L12)X complex, where L10 forms an elongated spine to which 2 to 4 L12 dimers bind in a sequential fashion. Binds GTP-bound translation factors.

Functionally, forms part of the ribosomal stalk which helps the ribosome interact with GTP-bound translation factors. Is thus essential for accurate translation. This Phytoplasma australiense protein is Large ribosomal subunit protein bL12.